Reading from the N-terminus, the 1367-residue chain is Probable serine/threonine-protein kinase pkgA (1367 aa).

Disordered regions lie at residues 140–164 (IDEN…NKTI), 264–429 (KNGK…LLSR), 456–556 (PTPL…SRKP), and 771–792 (PREE…SDPV). Positions 143-162 (NNNNNNNNNNNNNNNNNKNK) are enriched in low complexity. Pro residues predominate over residues 271–282 (IKRPSPPLPPPQ). Over residues 287 to 326 (EQQKEQKEQQKEQQKEQQKEQQKEQEQKQQEPQKYVKFEI) the composition is skewed to basic and acidic residues. Over residues 340 to 381 (ISSSNISNEISKQQQQQQQQQQQQQQQQQQQQQQQQQQQQQQ) the composition is skewed to low complexity. Polar residues predominate over residues 399-421 (ANNNILTTPLSSQPTQSLETPST). The segment covering 506 to 517 (GEDEEEDEDDDN) has biased composition (acidic residues). The segment covering 531–544 (LKNKRPFKKTHVHH) has biased composition (basic residues). Residues 810–1236 (FEFIKPITKG…AEEIKSHPFF (427 aa)) form the Protein kinase domain. Residues 816 to 824 (ITKGGYGKV) and Lys-839 contribute to the ATP site. The active-site Proton acceptor is the Asp-933. 3 disordered regions span residues 971 to 1034 (FSPT…PSNT), 1084 to 1134 (FIPP…HNIH), and 1288 to 1312 (QNQN…TATA). Residues 979-1015 (NNQSSSSSSVSNIGGSNTIGSNISSTNNNNNNNNTTG) are compositionally biased toward low complexity. The segment covering 1025–1034 (NTETPIPSNT) has biased composition (polar residues). Low complexity-rich tracts occupy residues 1092 to 1125 (QQPI…QQTT) and 1294 to 1312 (SSTI…TATA). The region spanning 1237–1347 (KSINWKTILT…VNFQSLLELN (111 aa)) is the AGC-kinase C-terminal domain.

Belongs to the protein kinase superfamily. AGC Ser/Thr protein kinase family.

The catalysed reaction is L-seryl-[protein] + ATP = O-phospho-L-seryl-[protein] + ADP + H(+). It carries out the reaction L-threonyl-[protein] + ATP = O-phospho-L-threonyl-[protein] + ADP + H(+). This Dictyostelium discoideum (Social amoeba) protein is Probable serine/threonine-protein kinase pkgA (pkgA).